Here is a 224-residue protein sequence, read N- to C-terminus: PKHD-type hydroxylase SO_3913 (224 aa).

The 99-residue stretch at 78–176 folds into the Fe2OG dioxygenase domain; that stretch reads QFYPPLFNRY…RTSAFMWLQS (99 aa). Fe cation-binding residues include histidine 96, aspartate 98, and histidine 157. Residue arginine 167 participates in 2-oxoglutarate binding.

The cofactor is Fe(2+). It depends on L-ascorbate as a cofactor.

This Shewanella oneidensis (strain ATCC 700550 / JCM 31522 / CIP 106686 / LMG 19005 / NCIMB 14063 / MR-1) protein is PKHD-type hydroxylase SO_3913.